We begin with the raw amino-acid sequence, 1188 residues long: AT-rich interactive domain-containing protein 5B (1188 aa).

A Glycyl lysine isopeptide (Lys-Gly) (interchain with G-Cter in SUMO2) cross-link involves residue lysine 130. A disordered region spans residues 251–277 (RPRKKKPCPQRRDSFSGVKDSNNNSDG). A Phosphoserine modification is found at serine 264. Residues 318–410 (RADEQAFLVA…LILPYERFIK (93 aa)) enclose the ARID domain. Lysine 336 is modified (N6,N6-dimethyllysine). Residues 412 to 611 (EEDKPLPPIK…QPPLANQNET (200 aa)) form a disordered region. Lysine 445 is covalently cross-linked (Glycyl lysine isopeptide (Lys-Gly) (interchain with G-Cter in SUMO2)). The span at 446 to 458 (HEIPKSKKEKENA) shows a compositional bias: basic and acidic residues. Glycyl lysine isopeptide (Lys-Gly) (interchain with G-Cter in SUMO2) cross-links involve residues lysine 494 and lysine 496. Residues 597 to 609 (SFPTTQPPLANQN) are compositionally biased toward polar residues. Glycyl lysine isopeptide (Lys-Gly) (interchain with G-Cter in SUMO2) cross-links involve residues lysine 767, lysine 774, lysine 803, and lysine 810. Disordered stretches follow at residues 846–874 (HHLHNEQTSKYPSRDMYRESENSSFPSHR) and 891–918 (DKKSAAAEAPTDDQPTDLSLPKNPHKPT). The segment covering 847-866 (HLHNEQTSKYPSRDMYRESE) has biased composition (basic and acidic residues). Residues lysine 893, lysine 916, lysine 920, and lysine 935 each participate in a glycyl lysine isopeptide (Lys-Gly) (interchain with G-Cter in SUMO2) cross-link. The segment at 956 to 978 (RVSPMTMSGPKKYPESLSRSGKP) is disordered. Glycyl lysine isopeptide (Lys-Gly) (interchain with G-Cter in SUMO2) cross-links involve residues lysine 988, lysine 1000, and lysine 1013. Positions 1028 to 1070 (ARAVSPLDPSKEVSGKEKASEQESEGSKAAHGGHSGGGSEGHK) are disordered. Phosphoserine is present on serine 1032. The span at 1036-1055 (PSKEVSGKEKASEQESEGSK) shows a compositional bias: basic and acidic residues. Residues lysine 1055 and lysine 1070 each participate in a glycyl lysine isopeptide (Lys-Gly) (interchain with G-Cter in SUMO2) cross-link. Serine 1133 bears the Phosphoserine mark.

It belongs to the ARID5B family. In terms of processing, methylation at Lys-336 prevents DNA-binding. Demethylation by PHF2 promotes recruitment of the PHF2-ARID5B complex to promoters. As to expression, widely expressed, including in liver (at protein level).

It localises to the nucleus. Functionally, transcription coactivator that binds to the 5'-AATA[CT]-3' core sequence and plays a key role in adipogenesis and liver development. Acts by forming a complex with phosphorylated PHF2, which mediates demethylation at Lys-336, leading to target the PHF2-ARID5B complex to target promoters, where PHF2 mediates demethylation of dimethylated 'Lys-9' of histone H3 (H3K9me2), followed by transcription activation of target genes. The PHF2-ARID5B complex acts as a coactivator of HNF4A in liver. Required for adipogenesis: regulates triglyceride metabolism in adipocytes by regulating expression of adipogenic genes. Overexpression leads to induction of smooth muscle marker genes, suggesting that it may also act as a regulator of smooth muscle cell differentiation and proliferation. Represses the cytomegalovirus enhancer. The protein is AT-rich interactive domain-containing protein 5B (ARID5B) of Homo sapiens (Human).